The sequence spans 669 residues: Dymeclin (669 aa).

Gly-2 is lipidated: N-myristoyl glycine.

This sequence belongs to the dymeclin family. In terms of assembly, interacts with GOLM1 and PPIB. Myristoylated in vitro; myristoylation is not essential for protein targeting to Golgi compartment.

It is found in the cytoplasm. The protein resides in the golgi apparatus. The protein localises to the membrane. In terms of biological role, necessary for correct organization of Golgi apparatus. Involved in bone development. This Pongo abelii (Sumatran orangutan) protein is Dymeclin (DYM).